Consider the following 224-residue polypeptide: LexA repressor (224 aa).

The segment at residues 41–61 is a DNA-binding region (H-T-H motif); the sequence is MREIGDAVGLSSLSSVTHQLN. Residues S148 and K185 each act as for autocatalytic cleavage activity in the active site.

Belongs to the peptidase S24 family. As to quaternary structure, homodimer.

The catalysed reaction is Hydrolysis of Ala-|-Gly bond in repressor LexA.. In terms of biological role, represses a number of genes involved in the response to DNA damage (SOS response), including recA and lexA. In the presence of single-stranded DNA, RecA interacts with LexA causing an autocatalytic cleavage which disrupts the DNA-binding part of LexA, leading to derepression of the SOS regulon and eventually DNA repair. This chain is LexA repressor, found in Leifsonia xyli subsp. xyli (strain CTCB07).